The chain runs to 426 residues: D-tagatose-1,6-bisphosphate aldolase subunit KbaZ (426 aa).

It belongs to the GatZ/KbaZ family. KbaZ subfamily. In terms of assembly, forms a complex with KbaY.

It participates in carbohydrate metabolism; D-tagatose 6-phosphate degradation; D-glyceraldehyde 3-phosphate and glycerone phosphate from D-tagatose 6-phosphate: step 2/2. Component of the tagatose-1,6-bisphosphate aldolase KbaYZ that is required for full activity and stability of the Y subunit. Could have a chaperone-like function for the proper and stable folding of KbaY. When expressed alone, KbaZ does not show any aldolase activity. The sequence is that of D-tagatose-1,6-bisphosphate aldolase subunit KbaZ from Escherichia coli O8 (strain IAI1).